Here is a 161-residue protein sequence, read N- to C-terminus: Phosphopantetheine adenylyltransferase (161 aa).

A substrate-binding site is contributed by Thr-9. Residues 9–10 (TF) and His-17 contribute to the ATP site. Residues Lys-41, Leu-73, and Arg-87 each coordinate substrate. Residues 88 to 90 (GMR), Glu-98, and 123 to 129 (WSYVSST) each bind ATP.

It belongs to the bacterial CoaD family. As to quaternary structure, homohexamer. Requires Mg(2+) as cofactor.

The protein localises to the cytoplasm. It carries out the reaction (R)-4'-phosphopantetheine + ATP + H(+) = 3'-dephospho-CoA + diphosphate. The protein operates within cofactor biosynthesis; coenzyme A biosynthesis; CoA from (R)-pantothenate: step 4/5. Functionally, reversibly transfers an adenylyl group from ATP to 4'-phosphopantetheine, yielding dephospho-CoA (dPCoA) and pyrophosphate. The chain is Phosphopantetheine adenylyltransferase from Actinobacillus succinogenes (strain ATCC 55618 / DSM 22257 / CCUG 43843 / 130Z).